Reading from the N-terminus, the 556-residue chain is Phosphomethylpyrimidine synthase (556 aa).

Substrate-binding positions include Asn191, Met220, Tyr249, His285, 305–307 (SRG), 346–349 (DALR), and Glu385. His389 is a binding site for Zn(2+). Tyr412 is a binding site for substrate. His453 provides a ligand contact to Zn(2+). Residues Cys535, Cys538, and Cys543 each coordinate [4Fe-4S] cluster.

The protein belongs to the ThiC family. It depends on [4Fe-4S] cluster as a cofactor.

The enzyme catalyses 5-amino-1-(5-phospho-beta-D-ribosyl)imidazole + S-adenosyl-L-methionine = 4-amino-2-methyl-5-(phosphooxymethyl)pyrimidine + CO + 5'-deoxyadenosine + formate + L-methionine + 3 H(+). It participates in cofactor biosynthesis; thiamine diphosphate biosynthesis. In terms of biological role, catalyzes the synthesis of the hydroxymethylpyrimidine phosphate (HMP-P) moiety of thiamine from aminoimidazole ribotide (AIR) in a radical S-adenosyl-L-methionine (SAM)-dependent reaction. This is Phosphomethylpyrimidine synthase from Chlorobaculum tepidum (strain ATCC 49652 / DSM 12025 / NBRC 103806 / TLS) (Chlorobium tepidum).